The following is a 465-amino-acid chain: ATP synthase subunit beta (465 aa).

Gly149–Thr156 contributes to the ATP binding site.

The protein belongs to the ATPase alpha/beta chains family. F-type ATPases have 2 components, CF(1) - the catalytic core - and CF(0) - the membrane proton channel. CF(1) has five subunits: alpha(3), beta(3), gamma(1), delta(1), epsilon(1). CF(0) has three main subunits: a(1), b(2) and c(9-12). The alpha and beta chains form an alternating ring which encloses part of the gamma chain. CF(1) is attached to CF(0) by a central stalk formed by the gamma and epsilon chains, while a peripheral stalk is formed by the delta and b chains.

Its subcellular location is the cell inner membrane. The enzyme catalyses ATP + H2O + 4 H(+)(in) = ADP + phosphate + 5 H(+)(out). Produces ATP from ADP in the presence of a proton gradient across the membrane. The catalytic sites are hosted primarily by the beta subunits. This chain is ATP synthase subunit beta, found in Dictyoglomus turgidum (strain DSM 6724 / Z-1310).